A 103-amino-acid polypeptide reads, in one-letter code: Hexon-interlacing protein (103 aa).

A coiled-coil region spans residues 72 to 99 (LDELKIQVAAMQNSVTAIQREVNDLKQR).

Belongs to the adenoviridae hexon-interlacing protein family. As to quaternary structure, homotrimer. Interacts with hexon protein; this interaction tethers the hexons together. Self-interacts with adjacent proteins. Interacts with kinesin light chain KLC1; this interaction leads to capsid disruption at the nuclear pore complex during virus entry into host cell.

Its subcellular location is the virion. The protein resides in the host nucleus. Its function is as follows. Structural component of the virion that acts as a cement protein on the capsid exterior and forms triskelion structures consisting of three molecules that stabilize three hexon trimers at the center of each icosahedral facet and fixes the peripentonal hexons. Dispensable for assembly. During virus entry, recruits the anterograde motor kinesin-1 to the capsid docked at the nuclear pore complex thereby subjecting the docked capsid to a pulling force. The resulting tension leads to capsid disruption, dispersion of capsid fragments toward cell periphery and eventually viral DNA entry into the host nucleus. The chain is Hexon-interlacing protein from Canis lupus familiaris (Dog).